We begin with the raw amino-acid sequence, 929 residues long: Isoleucine--tRNA ligase (929 aa).

The 'HIGH' region signature appears at 58–68 (PYANGDIHIGH). Residue Glu-563 participates in L-isoleucyl-5'-AMP binding. The 'KMSKS' region signature appears at 605 to 609 (KMSKS). Lys-608 serves as a coordination point for ATP. Zn(2+) is bound by residues Cys-892, Cys-895, Cys-912, and Cys-915.

The protein belongs to the class-I aminoacyl-tRNA synthetase family. IleS type 1 subfamily. Monomer. The cofactor is Zn(2+).

Its subcellular location is the cytoplasm. It catalyses the reaction tRNA(Ile) + L-isoleucine + ATP = L-isoleucyl-tRNA(Ile) + AMP + diphosphate. Its function is as follows. Catalyzes the attachment of isoleucine to tRNA(Ile). As IleRS can inadvertently accommodate and process structurally similar amino acids such as valine, to avoid such errors it has two additional distinct tRNA(Ile)-dependent editing activities. One activity is designated as 'pretransfer' editing and involves the hydrolysis of activated Val-AMP. The other activity is designated 'posttransfer' editing and involves deacylation of mischarged Val-tRNA(Ile). The chain is Isoleucine--tRNA ligase from Neisseria gonorrhoeae (strain NCCP11945).